The primary structure comprises 401 residues: Putative TRAP transporter large permease protein HI_0050 (401 aa).

11 consecutive transmembrane segments (helical) span residues 31-51 (FPLM…HGGI), 70-90 (LGYV…SAVA), 115-135 (GLIC…PMII), 144-164 (ITKL…GLWV), 193-213 (AFWP…GIFT), 217-237 (AGVV…GLTF), 253-273 (MVMF…VAQI), 290-310 (ILMF…DLIP), 330-350 (IAYF…TPPV), 353-373 (VLYV…KGIA), and 375-395 (FLFV…IVIV).

Belongs to the TRAP transporter large permease family.

It is found in the cell inner membrane. This chain is Putative TRAP transporter large permease protein HI_0050, found in Haemophilus influenzae (strain ATCC 51907 / DSM 11121 / KW20 / Rd).